The following is a 632-amino-acid chain: Epsin-3 (632 aa).

Positions 8, 11, 25, 30, 63, and 73 each coordinate a 1,2-diacyl-sn-glycero-3-phospho-(1D-myo-inositol-4,5-bisphosphate). The region spanning Asn12–Arg144 is the ENTH domain. A disordered region spans residues Tyr172–Leu214. Low complexity predominate over residues Ser179 to Thr196. A phosphoserine mark is found at Ser191 and Ser192. UIM domains lie at Glu209–Pro228 and Asp236–Glu255. The disordered stretch occupies residues Arg257–Ser296. Ser264 bears the Phosphoserine mark. Basic and acidic residues predominate over residues His276–Lys294. Tandem repeats lie at residues Asp321–Trp323, Asp344–Trp346, Glu371–Trp373, Asp387–Trp389, Asp404–Trp406, Asn524–Phe526, Asn537–Phe539, and Asn629–Phe631. The 5 X 3 AA repeats of [DE]-P-W stretch occupies residues Asp321–Trp406. 3 disordered regions span residues Pro326–Gly501, Pro525–Gly560, and Ala604–Leu632. The span at Thr353 to Glu371 shows a compositional bias: polar residues. Positions Asn524–Phe631 are 3 X 3 AA repeats of N-P-F.

It belongs to the epsin family. In terms of tissue distribution, detected in migrating keratinocytes from wounded skin, but not in differentiating keratinocytes or in normal skin. Detected in chronic wounds, basal cell carcinoma and ulcerative colitis.

The protein resides in the cytoplasm. The protein localises to the perinuclear region. Its subcellular location is the cytoplasmic vesicle. It is found in the clathrin-coated vesicle. It localises to the nucleus. This chain is Epsin-3 (EPN3), found in Homo sapiens (Human).